A 211-amino-acid chain; its full sequence is Vascular-related unknown protein 1 (211 aa).

Over residues 1 to 12 (MMDTFSCNSYEQ) the composition is skewed to polar residues. Residues 1–40 (MMDTFSCNSYEQNHPHDDDIDIDAHDHDSHGGDHQEESGW) form a disordered region. A compositionally biased stretch (basic and acidic residues) spans 13–37 (NHPHDDDIDIDAHDHDSHGGDHQEE).

As to expression, expressed in vascular tissues of cotyledons, rosette leaves, sepals, petals, anther filaments. Expressed in roots, inflorescence stems and developing seeds.

It is found in the cytoplasm. Its subcellular location is the nucleus. Its function is as follows. Involved in the regulation of xylem development and growth. May regulate secondary wall formation during vascular development by modulation of brassinosteroid, gibberellin and auxin hormone signaling pathways. This Arabidopsis thaliana (Mouse-ear cress) protein is Vascular-related unknown protein 1.